Here is a 114-residue protein sequence, read N- to C-terminus: Small ribosomal subunit protein bS16 (114 aa).

This sequence belongs to the bacterial ribosomal protein bS16 family.

In Prochlorococcus marinus subsp. pastoris (strain CCMP1986 / NIES-2087 / MED4), this protein is Small ribosomal subunit protein bS16.